Here is a 151-residue protein sequence, read N- to C-terminus: Large ribosomal subunit protein bL9 (151 aa).

It belongs to the bacterial ribosomal protein bL9 family.

In terms of biological role, binds to the 23S rRNA. The sequence is that of Large ribosomal subunit protein bL9 from Oenococcus oeni (strain ATCC BAA-331 / PSU-1).